A 781-amino-acid polypeptide reads, in one-letter code: MSKKFIELGDPVTQDEKDYEDYVGVGFAHQVPTMKRRKLTEHGNTTESKEDPEEPKSRDVFVSSQSSDESQEDSAENPEIAKEVSENCENLTETLKISNIESLDNVTERSEHTLDNHKSTEPMEEDVNNKSNIDVAINSDEDDELVLEENNKEMRDGEQVQQDLFADDQELIEYPGIMKDTTTQLDITDSEVETAQKMEMIEETEADSTFVGEDSKNQRQSGTTSDEVDADSQINLATKTVRTSSSSFLSTVSTCEAPAKGRARMYQKELEKHVIAFTEGNLTLQPDLNKVDPDRNYRYCTIPNFPASQGKLREDNRYGPKIVLPQRWREFDSRGRRRDSYFYFKRKLDGYLKCYKTTGYFMFVGLLHNMWEFDPDITYKLPALEMYYKEMSELVGREEVLEKFARVARIAKTAEDILPERIYRLVGDVESATLSHKQCAALVARMFFARPDSPFSFCRILSSDKSICVEKLKFLFTYFDKMSMDPPDGAVSFRLTKMDKDTFNEEWKDKKLRSLPEVEFFDEMLIEDTALCTQVDFANEHLGGGVLNHGSVQEEIRFLMCPEMMVGMLLCEKMKQLEAISIVGAYVFSSYTGYGHTLKWAELQPNHSRQNTNEFRDRFGRLRVETIAIDAILFKGSKLDCQTEQLNKANIIREMKKASIGFMSQGPKFTNIPIVTGWWGCGAFNGDKPLKFIIQVIAAGVADRPLHFCSFGEPELAAKCKKIIERMKQKDVTLGMLFSMINNTGLPHKHFEFYVFDRISTYLSSSEDVESSKSSPSVSRA.

Disordered regions lie at residues 28 to 87 (AHQV…VSEN), 102 to 131 (SLDN…NNKS), and 206 to 232 (ADST…DADS). The segment covering 106-121 (VTERSEHTLDNHKSTE) has biased composition (basic and acidic residues).

The protein belongs to the poly(ADP-ribose) glycohydrolase family. Expressed in head and tail neurons. Also detected in the central nerve cord and motor neurons.

It is found in the nucleus. The enzyme catalyses [(1''-&gt;2')-ADP-alpha-D-ribose](n) + H2O = [(1''-&gt;2')-ADP-alpha-D-ribose](n-1) + ADP-D-ribose. Its function is as follows. Poly(ADP-ribose) synthesized after DNA damage is only present transiently and is rapidly degraded by poly(ADP-ribose) glycohydrolase. Poly(ADP-ribose) metabolism may be required for maintenance of the normal function of neuronal cells. This chain is Poly(ADP-ribose) glycohydrolase 1, found in Caenorhabditis elegans.